Reading from the N-terminus, the 284-residue chain is T-cell leukemia homeobox protein 2 (284 aa).

Disordered stretches follow at residues 1–50, 78–106, and 139–166; these read MEPG…NGAF, GGVI…GPSG, and FSGT…SFSR. Gly residues predominate over residues 30–50; that stretch reads TPGGGLGLGRGGQGHGENGAF. The segment covering 87-96 has biased composition (pro residues); the sequence is RPLPVPPPAG. The homeobox DNA-binding region spans 157–216; it reads RKKPRTSFSRSQVLELERRFLRQKYLASAERAALAKALRMTDAQVKTWFQNRRTKWRRQT.

The protein localises to the nucleus. Its function is as follows. Transcription activator that binds DNA elements with the consensus sequence 5'-CGGTAATTGG-3'. Binds DNA via its homeobox. Required for normal cell death of enteric neurons in the gastrointestinal tract. Required for normal development of the enteric nervous system, and for proper development of normal motility of the gastrointestinal tract. The sequence is that of T-cell leukemia homeobox protein 2 (TLX2) from Homo sapiens (Human).